The primary structure comprises 156 residues: Small ribosomal subunit protein uS7 (156 aa).

The protein belongs to the universal ribosomal protein uS7 family. Part of the 30S ribosomal subunit. Contacts proteins S9 and S11.

Functionally, one of the primary rRNA binding proteins, it binds directly to 16S rRNA where it nucleates assembly of the head domain of the 30S subunit. Is located at the subunit interface close to the decoding center, probably blocks exit of the E-site tRNA. This is Small ribosomal subunit protein uS7 from Nitratiruptor sp. (strain SB155-2).